Consider the following 155-residue polypeptide: Transmembrane protein C1orf162 (155 aa).

Residues 1–28 (MGGNGSTCKPDTERQGTLSTAAPTTSPA) form a disordered region. The span at 19–28 (STAAPTTSPA) shows a compositional bias: low complexity. Residues 41 to 61 (ILAFCAGVLLTLLLIAFIFLI) traverse the membrane as a helical segment. The segment at 92–114 (ADHSKPQAPDPHSDPPAKLSSIP) is disordered. At S140 the chain carries Phosphoserine.

The protein localises to the membrane. This is Transmembrane protein C1orf162 (C1orf162) from Homo sapiens (Human).